Here is a 619-residue protein sequence, read N- to C-terminus: MKLITILFLCSRLLPSLTQESSQEIDCNDQDVFKAVDAALTKYNSENKSGNQFVLYRITEVARMDNPDTFYSLKYQIKEGDCPFQSNKTWQDCDYKDSAQAATGQCTATVAKRGNMKFSVAIQTCLITPAEGPVVTAQYECLGCVHPISTKSPDLEPVLRYAIQYFNNNTSHSHLFDLKEVKRAQKQVVSGWNYEVNYSIAQTNCSKEEFSFLTPDCKSLSSGDTGECTDKAHVDVKLRISSFSQKCDLYPGEDFLPPMVCVGCPKPIPVDSPDLEEALNHSIAKLNAEHDGTFYFKIDTVKKATVQVVGGLKYSIVFIARETTCSKGSNEELTKSCEINIHGQILHCDANVYVVPWEEKVYPTVNCQPLGQTSLMKRPPGFSPFRSVQVMKTEGSTTVSLPHSAMSPVQDEERDSGKEQGPTHGHGWDHGKQIKLHGLGLGHKHKHDQGHGHHRSHGLGHGHQKQHGLGHGHKHGHGHGKHKNKGKNNGKHYDWRTPYLASSYEDSTTSSAQTQEKTEETTLSSLAQPGVAITFPDFQDSDLIATVMPNTLPPHTESDDDWIPDIQTEPNSLAFKLISDFPETTSPKCPSRPWKPVNGVNPTVEMKESHDFDLVDALL.

The N-terminal stretch at 1–18 is a signal peptide; that stretch reads MKLITILFLCSRLLPSLT. Glutamine 19 carries the pyrrolidone carboxylic acid modification. One can recognise a Cystatin kininogen-type 1 domain in the interval 27–131; the sequence is CNDQDVFKAV…IQTCLITPAE (105 aa). Disulfide bonds link cysteine 27–cysteine 589, cysteine 82–cysteine 93, cysteine 106–cysteine 125, cysteine 141–cysteine 144, cysteine 205–cysteine 217, cysteine 228–cysteine 247, cysteine 261–cysteine 264, cysteine 325–cysteine 337, and cysteine 348–cysteine 367. Residue asparagine 87 is glycosylated (N-linked (GlcNAc...) asparagine). Threonine 136 is a glycosylation site (O-linked (GalNAc...) threonine; partial). The 104-residue stretch at 150-253 folds into the Cystatin kininogen-type 2 domain; that stretch reads TKSPDLEPVL…SQKCDLYPGE (104 aa). N-linked (GlcNAc...) asparagine glycans are attached at residues asparagine 168 and asparagine 169. A glycan (N-linked (GlcNAc...) asparagine; partial) is linked at asparagine 197. Asparagine 204 carries an N-linked (GlcNAc...) asparagine glycan. The Cystatin kininogen-type 3 domain maps to 270-373; that stretch reads VDSPDLEEAL…TVNCQPLGQT (104 aa). Asparagine 280 carries N-linked (GlcNAc...) asparagine glycosylation. A 4-hydroxyproline modification is found at proline 380. Residues 394-495 are disordered; sequence EGSTTVSLPH…GKNNGKHYDW (102 aa). Serine 396 is a glycosylation site (O-linked (GalNAc...) serine). Threonine 397 and threonine 398 each carry an O-linked (GalNAc...) threonine glycan. Residues serine 400 and serine 404 are each glycosylated (O-linked (GalNAc...) serine). Residues 442-490 are compositionally biased toward basic residues; sequence GHKHKHDQGHGHHRSHGLGHGHQKQHGLGHGHKHGHGHGKHKNKGKNNG. An O-linked (GalNAc...) serine glycan is attached at serine 510. Residues threonine 518, threonine 522, threonine 534, threonine 546, threonine 551, and threonine 568 are each glycosylated (O-linked (GalNAc...) threonine).

Bradykinin is released from kininogen by plasma kallikrein. As to expression, plasma.

The protein localises to the secreted. The protein resides in the extracellular space. Functionally, (1) Kininogens are inhibitors of thiol proteases; (2) HMW-kininogen plays an important role in blood coagulation by helping to position optimally prekallikrein and factor XI next to factor XII; (3) HMW-kininogen inhibits the thrombin- and plasmin-induced aggregation of thrombocytes; (4) the active peptide bradykinin that is released from HMW-kininogen shows a variety of physiological effects: (4A) influence in smooth muscle contraction, (4B) induction of hypotension, (4C) natriuresis and diuresis, (4D) decrease in blood glucose level, (4E) it is a mediator of inflammation and causes (4E1) increase in vascular permeability, (4E2) stimulation of nociceptors (4E3) release of other mediators of inflammation (e.g. prostaglandins), (4F) it has a cardioprotective effect (directly via bradykinin action, indirectly via endothelium-derived relaxing factor action); (5) LMW-kininogen inhibits the aggregation of thrombocytes; (6) LMW-kininogen is in contrast to HMW-kininogen not involved in blood clotting. This chain is Kininogen-2 (KNG2), found in Bos taurus (Bovine).